Here is a 453-residue protein sequence, read N- to C-terminus: Adenylyltransferase and sulfurtransferase MOCS3 (453 aa).

Phosphothreonine is present on threonine 62. Residues glycine 101, aspartate 122, serine 129 to arginine 133, lysine 146, and aspartate 190 to asparagine 191 each bind ATP. Residues cysteine 231 and cysteine 234 each coordinate Zn(2+). Cysteine 248 serves as the catalytic Glycyl thioester intermediate; for adenylyltransferase activity. Zn(2+) is bound by residues cysteine 306 and cysteine 309. The 97-residue stretch at glutamine 355 to proline 451 folds into the Rhodanese domain. Catalysis depends on cysteine 410, which acts as the Cysteine persulfide intermediate; for sulfurtransferase activity.

In the N-terminal section; belongs to the HesA/MoeB/ThiF family. UBA4 subfamily. The cofactor is Zn(2+).

Its subcellular location is the cytoplasm. The protein resides in the cytosol. It catalyses the reaction [molybdopterin-synthase sulfur-carrier protein]-C-terminal Gly-Gly + ATP + H(+) = [molybdopterin-synthase sulfur-carrier protein]-C-terminal Gly-Gly-AMP + diphosphate. The enzyme catalyses [molybdopterin-synthase sulfur-carrier protein]-C-terminal Gly-Gly-AMP + S-sulfanyl-L-cysteinyl-[cysteine desulfurase] + AH2 = [molybdopterin-synthase sulfur-carrier protein]-C-terminal-Gly-aminoethanethioate + L-cysteinyl-[cysteine desulfurase] + A + AMP + 2 H(+). Its pathway is tRNA modification; 5-methoxycarbonylmethyl-2-thiouridine-tRNA biosynthesis. The protein operates within cofactor biosynthesis; molybdopterin biosynthesis. Functionally, plays a central role in 2-thiolation of mcm(5)S(2)U at tRNA wobble positions of cytosolic tRNA(Lys), tRNA(Glu) and tRNA(Gln). Also essential during biosynthesis of the molybdenum cofactor. Acts by mediating the C-terminal thiocarboxylation of sulfur carriers URM1 and MOCS2A. Its N-terminus first activates URM1 and MOCS2A as acyl-adenylates (-COAMP), then the persulfide sulfur on the catalytic cysteine is transferred to URM1 and MOCS2A to form thiocarboxylation (-COSH) of their C-terminus. The reaction probably involves hydrogen sulfide that is generated from the persulfide intermediate and that acts as a nucleophile towards URM1 and MOCS2A. Subsequently, a transient disulfide bond is formed. Does not use thiosulfate as sulfur donor; NFS1 probably acting as a sulfur donor for thiocarboxylation reactions. In Drosophila yakuba (Fruit fly), this protein is Adenylyltransferase and sulfurtransferase MOCS3.